A 1187-amino-acid chain; its full sequence is RNA helicase Mov10l1 (1187 aa).

Positions 273 to 347 (RSKSCPGAAA…EPEPGGLIPP (75 aa)) are disordered. Basic and acidic residues-rich tracts occupy residues 296–307 (HHREDKTDEIPE) and 322–339 (ACKEESREKGNTPEKQEP). Repeat copies occupy residues 642–652 (TRNDSQSITNI), 653–663 (IRNDGQSITNV), 664–674 (TRNDGQPITKV), 675–685 (TRNNSQSITNI), and 686–696 (TRNDGQPITKN). Positions 642 to 696 (TRNDSQSITNIIRNDGQSITNVTRNDGQPITKVTRNNSQSITNITRNDGQPITKN) are 5 X 11 AA tandem repeats of [TI]-R-N-[DN]-[GS]-Q-[SP]-I-T-[NK]-[IVN]. The tract at residues 686–727 (TRNDGQPITKNKKTVKDQTKHTTEERHVGTTDQPEKASSTAE) is disordered. The segment covering 699 to 720 (TVKDQTKHTTEERHVGTTDQPE) has biased composition (basic and acidic residues). 772–779 (GPPGTGKT) is an ATP binding site. Positions 888–891 (DEAG) match the DEAG box motif.

It belongs to the DNA2/NAM7 helicase family. SDE3 subfamily. Interacts with PIWIL1. Interacts with PIWIL2. Interacts with PIWIL4. Interacts with HSPA2. Interacts with PLD6. As to expression, isoform 1: Specifically expressed in testis. Isoform 1: In testis, present in pachytene spermatocytes but absent in postmeiotic spermatids (at protein level). Isoform 2: Present in cardiomyocytes (at protein level). Isoform 2: Heart specific. Isoform 3: Heart specific and is specifically expressed in cardiac myocytes.

It localises to the cytoplasm. The catalysed reaction is ATP + H2O = ADP + phosphate + H(+). In terms of biological role, ATP-dependent RNA helicase required during spermatogenesis to repress transposable elements and prevent their mobilization, which is essential for germline integrity. Acts via the piRNA metabolic process, which mediates the repression of transposable elements during meiosis by forming complexes composed of piRNAs and Piwi proteins and governs the methylation and subsequent repression of transposons. Involved in the primary piRNA metabolic process. Specifically binds to piRNA precursors and promotes the generation of intermediate piRNA processing fragments that are subsequently loaded to Piwi proteins. Acts via its ATP-dependent RNA helicase activity: displays 5'-3' RNA unwinding activity and probably mediates unwinding and funneling of single-stranded piRNA precursor transcripts to the endonuclease that catalyzes the first cleavage step of piRNA processing to generate piRNA intermediate fragments that are subsequently loaded to Piwi proteins. Its function is as follows. May act downstream of MEF2C during heart formation. Acts as a cardiac-specific suppressor of cardiomyocyte hypertrophy and cell cycle progression, suggesting that it may suppress these processes through the regulation of CDKN1A. Such results however require additional evidence. This is RNA helicase Mov10l1 from Mus musculus (Mouse).